The following is a 327-amino-acid chain: Endo-1,4-beta-xylanase A (327 aa).

The region spanning 1–323 is the GH10 domain; sequence AASGLEAAMK…KPSYTSTLNT (323 aa). Cys81 and Cys123 are oxidised to a cystine. Residue Asn101 is glycosylated (N-linked (GlcNAc...) asparagine). The active-site Proton donor is the Glu131. Glu245 functions as the Nucleophile in the catalytic mechanism. A disulfide bridge links Cys273 with Cys279.

It belongs to the glycosyl hydrolase 10 (cellulase F) family. Monomer.

Its subcellular location is the secreted. It localises to the extracellular space. The catalysed reaction is Endohydrolysis of (1-&gt;4)-beta-D-xylosidic linkages in xylans.. The protein operates within glycan degradation; xylan degradation. In terms of biological role, catalyzes the hydrolysis of the internal glycosidic bonds in heteroxylans, releasing mainly xylobiose and xylotriose. Most active on oat-spelt xylan. The sequence is that of Endo-1,4-beta-xylanase A from Fusarium oxysporum f. sp. lycopersici (strain 4287 / CBS 123668 / FGSC 9935 / NRRL 34936) (Fusarium vascular wilt of tomato).